The following is a 618-amino-acid chain: Prothrombin (618 aa).

The signal sequence occupies residues M1 to S24. A propeptide spanning residues Q25–R43 is cleaved from the precursor. Positions A44–V90 constitute a Gla domain. 10 positions are modified to 4-carboxyglutamate: E50, E51, E58, E60, E63, E64, E69, E70, E73, and E76. C61 and C66 form a disulfide bridge. 10 cysteine pairs are disulfide-bonded: C91/C104, C109/C187, C130/C170, C158/C182, C215/C293, C236/C276, C264/C288, C333/C479, C388/C404, and C533/C547. 2 consecutive Kringle domains span residues C109–C187 and C215–Y292. 2 N-linked (GlcNAc...) asparagine glycosylation sites follow: N122 and N144. Residues I361 to D615 enclose the Peptidase S1 domain. The active-site Charge relay system is H403. A glycan (N-linked (GlcNAc...) asparagine) is linked at N413. D459 serves as the catalytic Charge relay system. Residues A548–V570 are high affinity receptor-binding region which is also known as the TP508 peptide. N553 is a glycosylation site (N-linked (GlcNAc...) asparagine). C561 and C591 form a disulfide bridge. Residue S565 is the Charge relay system of the active site.

It belongs to the peptidase S1 family. In terms of assembly, heterodimer (named alpha-thrombin) of a light and a heavy chain; disulfide-linked. Forms a heterodimer with SERPINA5. In plasma, interacts (via N-terminus) with alpha-1-microglobulin; this interaction does not prevent the activation of prothrombin to thrombin. Post-translationally, the gamma-carboxyglutamyl residues, which bind calcium ions, result from the carboxylation of glutamyl residues by a microsomal enzyme, the vitamin K-dependent carboxylase. The modified residues are necessary for the calcium-dependent interaction with a negatively charged phospholipid surface, which is essential for the conversion of prothrombin to thrombin. In terms of processing, in the penultimate step of the coagulation cascade, prothrombin is converted to thrombin by the prothrombinase complex composed of factor Xa (F10), cofactor Va (F5), and phospholipids. This activation requires factor Xa-catalyzed sequential cleavage at 2 sites, Arg-311 and Arg-360, along 2 possible pathways. In the first pathway, the first cleavage occurs at Arg-311, leading to the formation of the inactive intermediate prethrombin-2. This pathway preferentially occurs on platelets and in the absence of cofactor Va. In the second pathway, the first cleavage occurs at Arg-360, which separates protease domain into 2 chains that remain connected through a disulfide bond and generates the active intermediate meizothrombin. The presence of cofactor Va directs activation along the meizothrombin pathway and greatly accelerates the rate of cleavage at Arg-360, but has a smaller effect on the cleavage of meizothrombin at Arg-311. Meizothrombin accumulates as an intermediate when prothrombinase is assembled on the membrane of red blood cells.

It catalyses the reaction Selective cleavage of Arg-|-Gly bonds in fibrinogen to form fibrin and release fibrinopeptides A and B.. With respect to regulation, activity is promoted in the presence of negatively charged surfaces, such as polyphosphate and dextran sulfate. Inhibited by SERPINA5. Functionally, thrombin, which cleaves bonds after Arg and Lys, converts fibrinogen to fibrin and activates factors V, VII, VIII, XIII, and, in complex with thrombomodulin, protein C. Functions in blood homeostasis, inflammation and wound healing. Activates coagulation factor XI (F11); activation is promoted by the contact with negatively charged surfaces. Triggers the production of pro-inflammatory cytokines, such as MCP-1/CCL2 and IL8/CXCL8, in endothelial cells. This Mus musculus (Mouse) protein is Prothrombin (F2).